Here is a 44-residue protein sequence, read N- to C-terminus: DKLIGSCVWGATNYTSDCNAECKRRGYKGGHCGSFWNVNCWCEE.

3 disulfides stabilise this stretch: Cys-7–Cys-32, Cys-18–Cys-40, and Cys-22–Cys-42.

Hemolymph.

The protein localises to the secreted. Has antibacterial activity against the Gram-positive bacterium S.lutea (MIC=1.9 uM). Lacks antibacterial activity against the Gram-positive bacteria L.monocytogenes and M.luteus, and the Gram-negative bacteria E.coli D31, E.coli ATCC 25922, and S.typhimurium. Has antifungal activity against A.niger (MIC=2.9 uM), C.albicans (MIC=2.9 uM), C.fructus (MIC=2.9 uM), C.wickerhamii (MIC=2.9 uM), P.pastoris (MIC=2.9 uM), P.stiptis (MIC=2.9 uM), P.tannophilus (MIC=2.9 uM), T.harzianum (MIC=2.9 uM), and Z.marxianus (MIC=2.9 uM), but lacks antifungal activity against C.albidus, F.oxysporum, and S.cerevisiae. The sequence is that of Defensin-like peptide from Galleria mellonella (Greater wax moth).